A 296-amino-acid chain; its full sequence is uncharacterized protein (296 aa).

The protein resides in the mitochondrion. This is an uncharacterized protein from Podospora anserina (strain S / ATCC MYA-4624 / DSM 980 / FGSC 10383) (Pleurage anserina).